The primary structure comprises 536 residues: 1,4-beta-D-glucan cellobiohydrolase B (536 aa).

Residues 1 to 21 form the signal peptide; sequence MSSFQIYRAALLLSILATANA. The interval 22–458 is catalytic; sequence QQVGTYTTET…SNIKFGPIGS (437 aa). Glutamate 233 (nucleophile) is an active-site residue. The active-site Proton donor is glutamate 238. Asparagine 351 and asparagine 414 each carry an N-linked (GlcNAc...) asparagine glycan. The segment at 459–500 is ser/Thr-rich linker; it reads TYSSGSSSGSGSSSSSSSTTTKATSTTLKTTSTTSSGSSSTS. The disordered stretch occupies residues 464–499; sequence SSSGSGSSSSSSSTTTKATSTTLKTTSTTSSGSSST. One can recognise a CBM1 domain in the interval 500–536; the sequence is SAAQAYGQCGGQGWTGPTTCVSGYTCTYENAYYSQCL. 2 disulfide bridges follow: cysteine 508–cysteine 525 and cysteine 519–cysteine 535.

Belongs to the glycosyl hydrolase 7 (cellulase C) family.

The protein resides in the secreted. The catalysed reaction is Hydrolysis of (1-&gt;4)-beta-D-glucosidic linkages in cellulose and cellotetraose, releasing cellobiose from the non-reducing ends of the chains.. Its function is as follows. The biological conversion of cellulose to glucose generally requires three types of hydrolytic enzymes: (1) Endoglucanases which cut internal beta-1,4-glucosidic bonds; (2) Exocellobiohydrolases that cut the disaccharide cellobiose from the non-reducing end of the cellulose polymer chain; (3) Beta-1,4-glucosidases which hydrolyze the cellobiose and other short cello-oligosaccharides to glucose. The sequence is that of 1,4-beta-D-glucan cellobiohydrolase B (cbhB) from Aspergillus niger.